The primary structure comprises 217 residues: MOB kinase activator-like 2 (217 aa).

The disordered stretch occupies residues 15–38 (GKESIRGNYKPKKHPRGSSRHTMR). The span at 23-38 (YKPKKHPRGSSRHTMR) shows a compositional bias: basic residues. Residues Cys-89, Cys-94, His-167, and His-172 each contribute to the Zn(2+) site.

It belongs to the MOB1/phocein family.

The polypeptide is MOB kinase activator-like 2 (mob2) (Dictyostelium discoideum (Social amoeba)).